The primary structure comprises 215 residues: Glutathione S-transferase-like protein (215 aa).

A GST N-terminal domain is found at 1 to 76 (MPNARILKIQ…YVAASGPAAP (76 aa)). The region spanning 82–215 (NVAEQAAVRQ…LVAVRKEASV (134 aa)) is the GST C-terminal domain.

This sequence belongs to the GST superfamily.

The chain is Glutathione S-transferase-like protein from Aspergillus aculeatus (strain ATCC 16872 / CBS 172.66 / WB 5094).